The primary structure comprises 113 residues: Small ribosomal subunit protein bS6 (113 aa).

Belongs to the bacterial ribosomal protein bS6 family.

Binds together with bS18 to 16S ribosomal RNA. The protein is Small ribosomal subunit protein bS6 (rpsF) of Buchnera aphidicola subsp. Acyrthosiphon pisum (strain APS) (Acyrthosiphon pisum symbiotic bacterium).